The following is a 393-amino-acid chain: Synaptic vesicle membrane protein VAT-1 homolog (393 aa).

The interval 1 to 40 (MSDEREVAEAATGEDASSPPPKTEAASDPQHPAASEGAAA) is disordered. Serine 2 bears the N-acetylserine mark. Serine 2, serine 18, serine 27, serine 35, and serine 44 each carry phosphoserine.

The protein belongs to the zinc-containing alcohol dehydrogenase family. Quinone oxidoreductase subfamily. In terms of tissue distribution, expressed in brain. Also expressed in glioblastoma cells.

The protein resides in the cytoplasm. The protein localises to the mitochondrion outer membrane. Functionally, possesses ATPase activity. Plays a part in calcium-regulated keratinocyte activation in epidermal repair mechanisms. Has no effect on cell proliferation. Negatively regulates mitochondrial fusion in cooperation with mitofusin proteins (MFN1-2). The protein is Synaptic vesicle membrane protein VAT-1 homolog (VAT1) of Homo sapiens (Human).